The primary structure comprises 224 residues: MKFGVVVFPGSNCDRDVAYVTRDLLGQPTRMVWHQDTDIADLDVVIIPGGFSYGDYLRCGAIARFSPVMQQVVEHAQKGKLVLGICNGFQVLTEAGLLPGALARNQDLHFICDRVPLTVESTNSLWTQAYNPGEVITLPIAHGEGRFYADEATLSEIEDNGQVLFRYAGENPNGSLNNIAGICDRQGNVLGMMPHPERASDPVLGGSDGLKLFQGLLEKVVALA.

Residues 3–224 form the Glutamine amidotransferase type-1 domain; sequence FGVVVFPGSN…GLLEKVVALA (222 aa). The Nucleophile role is filled by Cys86. Active-site residues include His195 and Glu197.

As to quaternary structure, part of the FGAM synthase complex composed of 1 PurL, 1 PurQ and 2 PurS subunits.

It localises to the cytoplasm. It carries out the reaction N(2)-formyl-N(1)-(5-phospho-beta-D-ribosyl)glycinamide + L-glutamine + ATP + H2O = 2-formamido-N(1)-(5-O-phospho-beta-D-ribosyl)acetamidine + L-glutamate + ADP + phosphate + H(+). It catalyses the reaction L-glutamine + H2O = L-glutamate + NH4(+). It participates in purine metabolism; IMP biosynthesis via de novo pathway; 5-amino-1-(5-phospho-D-ribosyl)imidazole from N(2)-formyl-N(1)-(5-phospho-D-ribosyl)glycinamide: step 1/2. Its function is as follows. Part of the phosphoribosylformylglycinamidine synthase complex involved in the purines biosynthetic pathway. Catalyzes the ATP-dependent conversion of formylglycinamide ribonucleotide (FGAR) and glutamine to yield formylglycinamidine ribonucleotide (FGAM) and glutamate. The FGAM synthase complex is composed of three subunits. PurQ produces an ammonia molecule by converting glutamine to glutamate. PurL transfers the ammonia molecule to FGAR to form FGAM in an ATP-dependent manner. PurS interacts with PurQ and PurL and is thought to assist in the transfer of the ammonia molecule from PurQ to PurL. The polypeptide is Phosphoribosylformylglycinamidine synthase subunit PurQ (Nostoc sp. (strain PCC 7120 / SAG 25.82 / UTEX 2576)).